Consider the following 251-residue polypeptide: Pyruvate formate-lyase-activating enzyme (251 aa).

The region spanning Val-15–Asn-244 is the Radical SAM core domain. Cys-29, Cys-33, and Cys-36 together coordinate [4Fe-4S] cluster. Residues Tyr-35–His-37, Gly-79, Asp-134–Lys-136, and His-207 each bind S-adenosyl-L-methionine.

The protein belongs to the organic radical-activating enzymes family. The cofactor is [4Fe-4S] cluster.

It localises to the cytoplasm. It carries out the reaction glycyl-[formate C-acetyltransferase] + reduced [flavodoxin] + S-adenosyl-L-methionine = glycin-2-yl radical-[formate C-acetyltransferase] + semiquinone [flavodoxin] + 5'-deoxyadenosine + L-methionine + H(+). In terms of biological role, activation of pyruvate formate-lyase under anaerobic conditions by generation of an organic free radical, using S-adenosylmethionine and reduced flavodoxin as cosubstrates to produce 5'-deoxy-adenosine. The polypeptide is Pyruvate formate-lyase-activating enzyme (pflA) (Staphylococcus epidermidis (strain ATCC 12228 / FDA PCI 1200)).